The following is a 214-amino-acid chain: ATP-dependent Clp protease proteolytic subunit (214 aa).

Catalysis depends on S113, which acts as the Nucleophile. H138 is an active-site residue.

Belongs to the peptidase S14 family. In terms of assembly, fourteen ClpP subunits assemble into 2 heptameric rings which stack back to back to give a disk-like structure with a central cavity, resembling the structure of eukaryotic proteasomes.

It is found in the cytoplasm. The enzyme catalyses Hydrolysis of proteins to small peptides in the presence of ATP and magnesium. alpha-casein is the usual test substrate. In the absence of ATP, only oligopeptides shorter than five residues are hydrolyzed (such as succinyl-Leu-Tyr-|-NHMec, and Leu-Tyr-Leu-|-Tyr-Trp, in which cleavage of the -Tyr-|-Leu- and -Tyr-|-Trp bonds also occurs).. In terms of biological role, cleaves peptides in various proteins in a process that requires ATP hydrolysis. Has a chymotrypsin-like activity. Plays a major role in the degradation of misfolded proteins. The chain is ATP-dependent Clp protease proteolytic subunit from Alkalilimnicola ehrlichii (strain ATCC BAA-1101 / DSM 17681 / MLHE-1).